Consider the following 92-residue polypeptide: MARSVWKGPFVDAYVLRKAEKARESGKSDVIKIWSRRSTILPQFVGLTFGVYNGQKHIPVSVTEEMIGQKFGEYSPTRTYYGHAADKKAKRK.

Belongs to the universal ribosomal protein uS19 family.

Functionally, protein S19 forms a complex with S13 that binds strongly to the 16S ribosomal RNA. The sequence is that of Small ribosomal subunit protein uS19 from Paracoccus denitrificans (strain Pd 1222).